We begin with the raw amino-acid sequence, 892 residues long: Gamma-tubulin small complex component GCP3 (892 aa).

It belongs to the TUBGCP family. As to quaternary structure, component of the gamma-tubulin small complex (gamma-TuSC) composed of tubulin gamma chain, gamma-tubulin complex protein 2 (GCP2) and gamma-tubulin complex protein 3 (GCP3). Interacts with tubulin gamma chain.

The protein localises to the cytoplasm. Its subcellular location is the cytoskeleton. The protein resides in the flagellum axoneme. It localises to the flagellum basal body. Functionally, component of the gamma-tubulin small complex (gamma-TuSC) involved in microtubule (MT) nucleation for the formation of median bodies and in the biogenesis of flagella. Gamma-TuSC may be required for the correct positioning of EB1 within the trophozoites. This is Gamma-tubulin small complex component GCP3 from Giardia intestinalis (strain ATCC 50803 / WB clone C6) (Giardia lamblia).